Reading from the N-terminus, the 232-residue chain is Phospholipase A2 hemilipin (232 aa).

The first 18 residues, 1–18 (MTFLILTILATVTPSLYS), serve as a signal peptide directing secretion. Positions 19–105 (HVVQRELRVN…QRCSGSAEGR (87 aa)) are excised as a propeptide. Ca(2+) is bound by residues Trp-115, Gly-117, and Gly-119. 5 disulfides stabilise this stretch: Cys-116-Cys-137, Cys-136-Cys-175, Cys-143-Cys-168, Cys-166-Cys-206, and Cys-211-Cys-219. Asn-124 is a glycosylation site (N-linked (GlcNAc...) asparagine). The active site involves His-140. Asp-141 is a binding site for Ca(2+). Asn-157 is a glycosylation site (N-linked (GlcNAc...) asparagine). A propeptide spanning residues 214 to 217 (KRDA) is cleaved from the precursor.

This sequence belongs to the phospholipase A2 family. Group III subfamily. As to quaternary structure, heterodimer composed of a small subunit and a large subunit; disulfid-linked. Ca(2+) is required as a cofactor. As to expression, expressed by the venom gland.

Its subcellular location is the secreted. The enzyme catalyses a 1,2-diacyl-sn-glycero-3-phosphocholine + H2O = a 1-acyl-sn-glycero-3-phosphocholine + a fatty acid + H(+). Scorpion venom phospholipase A2 (PLA2) that shows high hydrolytic activities towards lecithin and acts as an effective blocker of all angiogenesis key steps in vivo and in vitro. It has no effect on apoptosis and does not display hemolytic, inflammatory or neurotoxic effects. PLA2 catalyzes the calcium-dependent hydrolysis of the 2-acyl groups in 3-sn-phosphoglycerides. This Hemiscorpius lepturus (Scorpion) protein is Phospholipase A2 hemilipin.